Reading from the N-terminus, the 455-residue chain is Bifunctional protein GlmU (455 aa).

Residues Met-1–Arg-226 are pyrophosphorylase. UDP-N-acetyl-alpha-D-glucosamine contacts are provided by residues Leu-8–Gly-11, Lys-22, Gln-73, Gly-78–Thr-79, Tyr-99–Asp-101, Gly-136, Glu-151, Asn-166, and Asn-224. Asp-101 serves as a coordination point for Mg(2+). Residue Asn-224 coordinates Mg(2+). The tract at residues Lys-227 to Ala-247 is linker. Residues Gly-248–Asp-455 form an N-acetyltransferase region. Positions 330 and 348 each coordinate UDP-N-acetyl-alpha-D-glucosamine. His-360 serves as the catalytic Proton acceptor. 2 residues coordinate UDP-N-acetyl-alpha-D-glucosamine: Tyr-363 and Asn-374. Acetyl-CoA-binding positions include Ala-377, Asn-383–Tyr-384, Ser-402, Ala-420, and Arg-437.

This sequence in the N-terminal section; belongs to the N-acetylglucosamine-1-phosphate uridyltransferase family. The protein in the C-terminal section; belongs to the transferase hexapeptide repeat family. In terms of assembly, homotrimer. It depends on Mg(2+) as a cofactor.

The protein localises to the cytoplasm. It catalyses the reaction alpha-D-glucosamine 1-phosphate + acetyl-CoA = N-acetyl-alpha-D-glucosamine 1-phosphate + CoA + H(+). It carries out the reaction N-acetyl-alpha-D-glucosamine 1-phosphate + UTP + H(+) = UDP-N-acetyl-alpha-D-glucosamine + diphosphate. It participates in nucleotide-sugar biosynthesis; UDP-N-acetyl-alpha-D-glucosamine biosynthesis; N-acetyl-alpha-D-glucosamine 1-phosphate from alpha-D-glucosamine 6-phosphate (route II): step 2/2. It functions in the pathway nucleotide-sugar biosynthesis; UDP-N-acetyl-alpha-D-glucosamine biosynthesis; UDP-N-acetyl-alpha-D-glucosamine from N-acetyl-alpha-D-glucosamine 1-phosphate: step 1/1. The protein operates within bacterial outer membrane biogenesis; LPS lipid A biosynthesis. Functionally, catalyzes the last two sequential reactions in the de novo biosynthetic pathway for UDP-N-acetylglucosamine (UDP-GlcNAc). The C-terminal domain catalyzes the transfer of acetyl group from acetyl coenzyme A to glucosamine-1-phosphate (GlcN-1-P) to produce N-acetylglucosamine-1-phosphate (GlcNAc-1-P), which is converted into UDP-GlcNAc by the transfer of uridine 5-monophosphate (from uridine 5-triphosphate), a reaction catalyzed by the N-terminal domain. In Pseudomonas syringae pv. tomato (strain ATCC BAA-871 / DC3000), this protein is Bifunctional protein GlmU.